A 271-amino-acid polypeptide reads, in one-letter code: Serine O-acetyltransferase (271 aa).

The active-site Acyl-thioester intermediate is Cys-112. The active-site Proton acceptor is His-204. Glu-206 is a catalytic residue.

Belongs to the MetA family.

It carries out the reaction L-serine + acetyl-CoA = O-acetyl-L-serine + CoA. The protein operates within amino-acid biosynthesis; L-cysteine biosynthesis; L-cysteine from L-serine: step 1/2. Its function is as follows. Catalyzes the formation of O-acetylserine (OAS) from L-serine and acetyl-CoA. To a lesser extent, is also able to use succinyl-CoA and propionyl-CoA as acyl donors, but not butyryl-CoA. Does not acylate D-serine and L-homoserine. The sequence is that of Serine O-acetyltransferase from Lacticaseibacillus casei (Lactobacillus casei).